We begin with the raw amino-acid sequence, 452 residues long: Retinoid-inducible serine carboxypeptidase (452 aa).

The N-terminal stretch at 1–28 (MELSRRICLVRLWLLLLSFLLGFSAGSA) is a signal peptide. 3 N-linked (GlcNAc...) asparagine glycosylation sites follow: N64, N102, and N126. Residue S167 is part of the active site. N-linked (GlcNAc...) asparagine glycosylation is found at N192 and N362. Residues D371 and H431 contribute to the active site.

The protein belongs to the peptidase S10 family.

The protein resides in the secreted. Its function is as follows. May be involved in vascular wall and kidney homeostasis. The polypeptide is Retinoid-inducible serine carboxypeptidase (Scpep1) (Mus musculus (Mouse)).